The chain runs to 154 residues: Myoglobin (154 aa).

The 147-residue stretch at 2–148 (GLSDGEWQLV…FRNDMAAKYK (147 aa)) folds into the Globin domain. At S4 the chain carries Phosphoserine. A nitrite-binding site is contributed by H65. H65 contacts O2. A Phosphothreonine modification is found at T68. H94 serves as a coordination point for heme b.

It belongs to the globin family. As to quaternary structure, monomeric.

It is found in the cytoplasm. Its subcellular location is the sarcoplasm. The catalysed reaction is Fe(III)-heme b-[protein] + nitric oxide + H2O = Fe(II)-heme b-[protein] + nitrite + 2 H(+). The enzyme catalyses H2O2 + AH2 = A + 2 H2O. In terms of biological role, monomeric heme protein which primary function is to store oxygen and facilitate its diffusion within muscle tissues. Reversibly binds oxygen through a pentacoordinated heme iron and enables its timely and efficient release as needed during periods of heightened demand. Depending on the oxidative conditions of tissues and cells, and in addition to its ability to bind oxygen, it also has a nitrite reductase activity whereby it regulates the production of bioactive nitric oxide. Under stress conditions, like hypoxia and anoxia, it also protects cells against reactive oxygen species thanks to its pseudoperoxidase activity. The protein is Myoglobin (MB) of Macaca fascicularis (Crab-eating macaque).